A 432-amino-acid chain; its full sequence is SVP1-like protein 2 (432 aa).

2 WD repeats span residues 223–263 and 268–307; these read AHKS…LLYE and LDRAIVTSMKFSHDDSKLAVLSDKNTLHVYNVSPLNTSSG.

This sequence belongs to the WD repeat PROPPIN family.

The protein resides in the vacuole membrane. It is found in the cytoplasmic vesicle membrane. Its function is as follows. Involved in mitochondrial or peroxisomal functions and amino acid signaling pathways. This chain is SVP1-like protein 2 (HSV2), found in Debaryomyces hansenii (strain ATCC 36239 / CBS 767 / BCRC 21394 / JCM 1990 / NBRC 0083 / IGC 2968) (Yeast).